We begin with the raw amino-acid sequence, 245 residues long: UDP-2,3-diacylglucosamine hydrolase (245 aa).

Positions 8, 10, 41, 80, and 115 each coordinate Mn(2+). 80-81 (NR) lines the substrate pocket. Residues Asp123, Ser161, Lys165, Lys168, and His196 each contribute to the substrate site. The Mn(2+) site is built by His196 and His198.

Belongs to the LpxH family. Mn(2+) is required as a cofactor.

Its subcellular location is the cell inner membrane. It carries out the reaction UDP-2-N,3-O-bis[(3R)-3-hydroxytetradecanoyl]-alpha-D-glucosamine + H2O = 2-N,3-O-bis[(3R)-3-hydroxytetradecanoyl]-alpha-D-glucosaminyl 1-phosphate + UMP + 2 H(+). The protein operates within glycolipid biosynthesis; lipid IV(A) biosynthesis; lipid IV(A) from (3R)-3-hydroxytetradecanoyl-[acyl-carrier-protein] and UDP-N-acetyl-alpha-D-glucosamine: step 4/6. Hydrolyzes the pyrophosphate bond of UDP-2,3-diacylglucosamine to yield 2,3-diacylglucosamine 1-phosphate (lipid X) and UMP by catalyzing the attack of water at the alpha-P atom. Involved in the biosynthesis of lipid A, a phosphorylated glycolipid that anchors the lipopolysaccharide to the outer membrane of the cell. The chain is UDP-2,3-diacylglucosamine hydrolase from Psychromonas ingrahamii (strain DSM 17664 / CCUG 51855 / 37).